The primary structure comprises 302 residues: tRNA-cytidine(32) 2-sulfurtransferase (302 aa).

The PP-loop motif motif lies at 44-49; sequence SGGKDS. 3 residues coordinate [4Fe-4S] cluster: Cys-119, Cys-122, and Cys-210.

The protein belongs to the TtcA family. Homodimer. The cofactor is Mg(2+). [4Fe-4S] cluster serves as cofactor.

The protein resides in the cytoplasm. It carries out the reaction cytidine(32) in tRNA + S-sulfanyl-L-cysteinyl-[cysteine desulfurase] + AH2 + ATP = 2-thiocytidine(32) in tRNA + L-cysteinyl-[cysteine desulfurase] + A + AMP + diphosphate + H(+). It participates in tRNA modification. Functionally, catalyzes the ATP-dependent 2-thiolation of cytidine in position 32 of tRNA, to form 2-thiocytidine (s(2)C32). The sulfur atoms are provided by the cysteine/cysteine desulfurase (IscS) system. The protein is tRNA-cytidine(32) 2-sulfurtransferase of Tolumonas auensis (strain DSM 9187 / NBRC 110442 / TA 4).